We begin with the raw amino-acid sequence, 322 residues long: Phosphatidylserine decarboxylase proenzyme (322 aa).

Catalysis depends on charge relay system; for autoendoproteolytic cleavage activity residues D90, H147, and S254. S254 serves as the catalytic Schiff-base intermediate with substrate; via pyruvic acid; for decarboxylase activity. Position 254 is a pyruvic acid (Ser); by autocatalysis (S254). The disordered stretch occupies residues 295–322 (VEPAPLPTEEIKAEHDASPLVDNKKDDT). Residues 303–322 (EEIKAEHDASPLVDNKKDDT) are compositionally biased toward basic and acidic residues.

The protein belongs to the phosphatidylserine decarboxylase family. PSD-B subfamily. Prokaryotic type I sub-subfamily. In terms of assembly, heterodimer of a large membrane-associated beta subunit and a small pyruvoyl-containing alpha subunit. The cofactor is pyruvate. Is synthesized initially as an inactive proenzyme. Formation of the active enzyme involves a self-maturation process in which the active site pyruvoyl group is generated from an internal serine residue via an autocatalytic post-translational modification. Two non-identical subunits are generated from the proenzyme in this reaction, and the pyruvate is formed at the N-terminus of the alpha chain, which is derived from the carboxyl end of the proenzyme. The autoendoproteolytic cleavage occurs by a canonical serine protease mechanism, in which the side chain hydroxyl group of the serine supplies its oxygen atom to form the C-terminus of the beta chain, while the remainder of the serine residue undergoes an oxidative deamination to produce ammonia and the pyruvoyl prosthetic group on the alpha chain. During this reaction, the Ser that is part of the protease active site of the proenzyme becomes the pyruvoyl prosthetic group, which constitutes an essential element of the active site of the mature decarboxylase.

Its subcellular location is the cell membrane. The catalysed reaction is a 1,2-diacyl-sn-glycero-3-phospho-L-serine + H(+) = a 1,2-diacyl-sn-glycero-3-phosphoethanolamine + CO2. It participates in phospholipid metabolism; phosphatidylethanolamine biosynthesis; phosphatidylethanolamine from CDP-diacylglycerol: step 2/2. In terms of biological role, catalyzes the formation of phosphatidylethanolamine (PtdEtn) from phosphatidylserine (PtdSer). The sequence is that of Phosphatidylserine decarboxylase proenzyme from Salmonella agona (strain SL483).